A 370-amino-acid polypeptide reads, in one-letter code: tRNA-specific 2-thiouridylase MnmA (370 aa).

ATP-binding positions include 24-31 and L50; that span reads AMSGGVDS. The active-site Nucleophile is the C118. Residues C118 and C214 are joined by a disulfide bond. Residue G142 coordinates ATP. The tract at residues 164-166 is interaction with tRNA; that stretch reads KDQ. The active-site Cysteine persulfide intermediate is the C214.

It belongs to the MnmA/TRMU family.

Its subcellular location is the cytoplasm. It catalyses the reaction S-sulfanyl-L-cysteinyl-[protein] + uridine(34) in tRNA + AH2 + ATP = 2-thiouridine(34) in tRNA + L-cysteinyl-[protein] + A + AMP + diphosphate + H(+). Functionally, catalyzes the 2-thiolation of uridine at the wobble position (U34) of tRNA, leading to the formation of s(2)U34. The polypeptide is tRNA-specific 2-thiouridylase MnmA (Ehrlichia ruminantium (strain Gardel)).